We begin with the raw amino-acid sequence, 371 residues long: 4-hydroxy-3-methylbut-2-en-1-yl diphosphate synthase (flavodoxin) (371 aa).

[4Fe-4S] cluster contacts are provided by Cys-270, Cys-273, Cys-305, and Glu-312.

It belongs to the IspG family. It depends on [4Fe-4S] cluster as a cofactor.

It catalyses the reaction (2E)-4-hydroxy-3-methylbut-2-enyl diphosphate + oxidized [flavodoxin] + H2O + 2 H(+) = 2-C-methyl-D-erythritol 2,4-cyclic diphosphate + reduced [flavodoxin]. It functions in the pathway isoprenoid biosynthesis; isopentenyl diphosphate biosynthesis via DXP pathway; isopentenyl diphosphate from 1-deoxy-D-xylulose 5-phosphate: step 5/6. Functionally, converts 2C-methyl-D-erythritol 2,4-cyclodiphosphate (ME-2,4cPP) into 1-hydroxy-2-methyl-2-(E)-butenyl 4-diphosphate. The sequence is that of 4-hydroxy-3-methylbut-2-en-1-yl diphosphate synthase (flavodoxin) from Shewanella sp. (strain W3-18-1).